We begin with the raw amino-acid sequence, 568 residues long: Urease subunit alpha (568 aa).

Residues Gly130–Phe568 form the Urease domain. Residues His135, His137, and Lys218 each coordinate Ni(2+). Lys218 carries the N6-carboxylysine modification. His220 serves as a coordination point for substrate. The Ni(2+) site is built by His247 and His273. His321 functions as the Proton donor in the catalytic mechanism. Asp361 contributes to the Ni(2+) binding site.

Belongs to the metallo-dependent hydrolases superfamily. Urease alpha subunit family. In terms of assembly, heterotrimer of UreA (gamma), UreB (beta) and UreC (alpha) subunits. Three heterotrimers associate to form the active enzyme. Ni cation serves as cofactor. Carboxylation allows a single lysine to coordinate two nickel ions.

It localises to the cytoplasm. It carries out the reaction urea + 2 H2O + H(+) = hydrogencarbonate + 2 NH4(+). It participates in nitrogen metabolism; urea degradation; CO(2) and NH(3) from urea (urease route): step 1/1. The protein is Urease subunit alpha of Burkholderia cenocepacia (strain ATCC BAA-245 / DSM 16553 / LMG 16656 / NCTC 13227 / J2315 / CF5610) (Burkholderia cepacia (strain J2315)).